The chain runs to 416 residues: Serine hydroxymethyltransferase (416 aa).

Residues leucine 121 and glycine 125–leucine 127 each bind (6S)-5,6,7,8-tetrahydrofolate. Lysine 230 is modified (N6-(pyridoxal phosphate)lysine). Position 354-356 (serine 354–phenylalanine 356) interacts with (6S)-5,6,7,8-tetrahydrofolate.

Belongs to the SHMT family. In terms of assembly, homodimer. It depends on pyridoxal 5'-phosphate as a cofactor.

It localises to the cytoplasm. It catalyses the reaction (6R)-5,10-methylene-5,6,7,8-tetrahydrofolate + glycine + H2O = (6S)-5,6,7,8-tetrahydrofolate + L-serine. It functions in the pathway one-carbon metabolism; tetrahydrofolate interconversion. The protein operates within amino-acid biosynthesis; glycine biosynthesis; glycine from L-serine: step 1/1. Its function is as follows. Catalyzes the reversible interconversion of serine and glycine with tetrahydrofolate (THF) serving as the one-carbon carrier. This reaction serves as the major source of one-carbon groups required for the biosynthesis of purines, thymidylate, methionine, and other important biomolecules. Also exhibits THF-independent aldolase activity toward beta-hydroxyamino acids, producing glycine and aldehydes, via a retro-aldol mechanism. This is Serine hydroxymethyltransferase from Prochlorococcus marinus (strain MIT 9211).